The sequence spans 91 residues: U6 snRNA-associated Sm-like protein LSm5 (91 aa).

A2 carries the post-translational modification N-acetylalanine. The Sm domain maps to 13–88 (LPLELVDKCI…ITMLVPGGEG (76 aa)).

It belongs to the snRNP Sm proteins family. In terms of assembly, component of the precatalytic spliceosome (spliceosome B complex). Component of the U4/U6-U5 tri-snRNP complex, a building block of the precatalytic spliceosome (spliceosome B complex). The U4/U6-U5 tri-snRNP complex is composed of the U4, U6 and U5 snRNAs and at least PRPF3, PRPF4, PRPF6, PRPF8, PRPF31, SNRNP200, TXNL4A, SNRNP40, SNRPB, SNRPD1, SNRPD2, SNRPD3, SNRPE, SNRPF, SNRPG, DDX23, CD2BP2, PPIH, SNU13, EFTUD2, SART1 and USP39, plus LSM2, LSM3, LSM4, LSM5, LSM6, LSM7 and LSM8. LSM2, LSM3, LSM4, LSM5, LSM6, LSM7 and LSM8 form a heptameric, ring-shaped subcomplex (the LSM2-8 complex) that is part of the U4/U6-U5 tri-snRNP complex and the precatalytic spliceosome.

Its subcellular location is the nucleus. Functionally, plays a role in pre-mRNA splicing as component of the U4/U6-U5 tri-snRNP complex that is involved in spliceosome assembly, and as component of the precatalytic spliceosome (spliceosome B complex). The heptameric LSM2-8 complex binds specifically to the 3'-terminal U-tract of U6 snRNA. This is U6 snRNA-associated Sm-like protein LSm5 (LSM5) from Bos taurus (Bovine).